The following is a 208-amino-acid chain: ATP phosphoribosyltransferase (208 aa).

Belongs to the ATP phosphoribosyltransferase family. Short subfamily. In terms of assembly, heteromultimer composed of HisG and HisZ subunits.

Its subcellular location is the cytoplasm. It catalyses the reaction 1-(5-phospho-beta-D-ribosyl)-ATP + diphosphate = 5-phospho-alpha-D-ribose 1-diphosphate + ATP. It functions in the pathway amino-acid biosynthesis; L-histidine biosynthesis; L-histidine from 5-phospho-alpha-D-ribose 1-diphosphate: step 1/9. In terms of biological role, catalyzes the condensation of ATP and 5-phosphoribose 1-diphosphate to form N'-(5'-phosphoribosyl)-ATP (PR-ATP). Has a crucial role in the pathway because the rate of histidine biosynthesis seems to be controlled primarily by regulation of HisG enzymatic activity. This Lactococcus lactis subsp. cremoris (strain MG1363) protein is ATP phosphoribosyltransferase.